Reading from the N-terminus, the 174-residue chain is RNA polymerase sigma factor CarQ (174 aa).

Residues 39–52 carry the Polymerase core binding motif; sequence DLLQATFLSVIRSR. A disordered region spans residues 86–106; sequence YASREDTATPASAAPDDSDPS. A DNA-binding region (H-T-H motif) is located at residues 136–155; the sequence is FEEIGALRGISPGAARLRAH.

The protein belongs to the sigma-70 factor family. ECF subfamily.

Functionally, sigma factors are initiation factors that promote the attachment of RNA polymerase to specific initiation sites and are then released. This sigma factor regulates genes for the light induced biosynthesis of carotenoids. The polypeptide is RNA polymerase sigma factor CarQ (carQ) (Myxococcus xanthus).